The chain runs to 130 residues: Sulfurtransferase TusD (130 aa).

The active-site Cysteine persulfide intermediate is the Cys78.

Belongs to the DsrE/TusD family. As to quaternary structure, heterohexamer, formed by a dimer of trimers. The hexameric TusBCD complex contains 2 copies each of TusB, TusC and TusD. The TusBCD complex interacts with TusE.

The protein resides in the cytoplasm. Part of a sulfur-relay system required for 2-thiolation of 5-methylaminomethyl-2-thiouridine (mnm(5)s(2)U) at tRNA wobble positions. Accepts sulfur from TusA and transfers it in turn to TusE. The polypeptide is Sulfurtransferase TusD (Buchnera aphidicola subsp. Baizongia pistaciae (strain Bp)).